We begin with the raw amino-acid sequence, 777 residues long: Probable aconitate hydratase, mitochondrial (777 aa).

A mitochondrion-targeting transit peptide spans 1–26; that stretch reads MNSLLRLSHLAGPAHYRALHSSSSIW. Residues Gln-96 and 189–191 contribute to the substrate site; that span reads DSH. Residues Cys-382, Cys-445, and Cys-448 each coordinate [4Fe-4S] cluster. Substrate contacts are provided by Arg-471 and Arg-476. The segment at 534–555 is disordered; that stretch reads YDPGEDTFQAPSGSGQVDVSPS. Polar residues predominate over residues 542-555; that stretch reads QAPSGSGQVDVSPS. Substrate is bound by residues Arg-601 and 664–665; that span reads SR.

Belongs to the aconitase/IPM isomerase family. In terms of assembly, monomer. [4Fe-4S] cluster is required as a cofactor.

It localises to the mitochondrion. The enzyme catalyses citrate = D-threo-isocitrate. It functions in the pathway carbohydrate metabolism; tricarboxylic acid cycle; isocitrate from oxaloacetate: step 2/2. Its function is as follows. Catalyzes the isomerization of citrate to isocitrate via cis-aconitate. The sequence is that of Probable aconitate hydratase, mitochondrial from Caenorhabditis elegans.